Consider the following 189-residue polypeptide: Crossover junction endodeoxyribonuclease RuvC (189 aa).

Catalysis depends on residues aspartate 12, glutamate 72, and aspartate 147. Mg(2+) is bound by residues aspartate 12, glutamate 72, and aspartate 147.

It belongs to the RuvC family. In terms of assembly, homodimer which binds Holliday junction (HJ) DNA. The HJ becomes 2-fold symmetrical on binding to RuvC with unstacked arms; it has a different conformation from HJ DNA in complex with RuvA. In the full resolvosome a probable DNA-RuvA(4)-RuvB(12)-RuvC(2) complex forms which resolves the HJ. It depends on Mg(2+) as a cofactor.

It is found in the cytoplasm. It catalyses the reaction Endonucleolytic cleavage at a junction such as a reciprocal single-stranded crossover between two homologous DNA duplexes (Holliday junction).. In terms of biological role, the RuvA-RuvB-RuvC complex processes Holliday junction (HJ) DNA during genetic recombination and DNA repair. Endonuclease that resolves HJ intermediates. Cleaves cruciform DNA by making single-stranded nicks across the HJ at symmetrical positions within the homologous arms, yielding a 5'-phosphate and a 3'-hydroxyl group; requires a central core of homology in the junction. The consensus cleavage sequence is 5'-(A/T)TT(C/G)-3'. Cleavage occurs on the 3'-side of the TT dinucleotide at the point of strand exchange. HJ branch migration catalyzed by RuvA-RuvB allows RuvC to scan DNA until it finds its consensus sequence, where it cleaves and resolves the cruciform DNA. The sequence is that of Crossover junction endodeoxyribonuclease RuvC from Porphyromonas gingivalis (strain ATCC BAA-308 / W83).